Reading from the N-terminus, the 247-residue chain is F-box and leucine-rich protein 22 (247 aa).

One can recognise an F-box domain in the interval Thr6 to Leu52. Disordered regions lie at residues Ser124–Ser154 and Gly173–Gln247. Pro residues predominate over residues Glu184–Ala200.

As to quaternary structure, directly interacts with SKP1 and CUL1. Enriched in cardiac muscle.

It is found in the cytoplasm. The protein resides in the myofibril. Its subcellular location is the sarcomere. It localises to the z line. Its pathway is protein modification; protein ubiquitination. Substrate-recognition component of the SCF (SKP1-CUL1-F-box protein)-type E3 ubiquitin ligase complex. Promotes ubiquitination of sarcomeric proteins alpha-actinin-2 (ACTN2) and filamin-C (FLNC). This Homo sapiens (Human) protein is F-box and leucine-rich protein 22 (FBXL22).